The primary structure comprises 173 residues: Co-chaperone protein HscB homolog (173 aa).

Positions N3–L75 constitute a J domain.

The protein belongs to the HscB family. As to quaternary structure, interacts with HscA and stimulates its ATPase activity.

Its function is as follows. Co-chaperone involved in the maturation of iron-sulfur cluster-containing proteins. Seems to help targeting proteins to be folded toward HscA. This Mannheimia succiniciproducens (strain KCTC 0769BP / MBEL55E) protein is Co-chaperone protein HscB homolog.